The chain runs to 621 residues: Putative acyltransferase plsB1 (621 aa).

The HXXXXD motif signature appears at 123–128; sequence HRSYLD.

Belongs to the GPAT/DAPAT family.

The protein resides in the cell membrane. This is Putative acyltransferase plsB1 (plsB1) from Mycobacterium bovis (strain ATCC BAA-935 / AF2122/97).